Consider the following 197-residue polypeptide: Probable chorismate pyruvate-lyase 2 (197 aa).

The span at 1–14 (MRFDAADAHWRETP) shows a compositional bias: basic and acidic residues. Residues 1 to 23 (MRFDAADAHWRETPRPGASSAQK) form a disordered region. Positions 73, 111, and 173 each coordinate substrate.

Belongs to the UbiC family.

Its subcellular location is the cytoplasm. It catalyses the reaction chorismate = 4-hydroxybenzoate + pyruvate. It participates in cofactor biosynthesis; ubiquinone biosynthesis. Removes the pyruvyl group from chorismate, with concomitant aromatization of the ring, to provide 4-hydroxybenzoate (4HB) for the ubiquinone pathway. The chain is Probable chorismate pyruvate-lyase 2 from Burkholderia pseudomallei (strain 1710b).